Reading from the N-terminus, the 434-residue chain is Putative nuclease OPG089 (434 aa).

D33, D74, E168, D170, D196, and D198 together coordinate Mg(2+).

This sequence belongs to the XPG/RAD2 endonuclease family. FEN1 subfamily. Mg(2+) serves as cofactor.

The protein resides in the virion. In terms of biological role, putative nuclease that seems to be required for double-strand break repair, homologous recombination, and production of full-length viral genomic DNA. This Vaccinia virus (strain Copenhagen) (VACV) protein is Putative nuclease OPG089 (OPG089).